The chain runs to 402 residues: Acetyl-CoA acetyltransferase (402 aa).

Cys-90 serves as the catalytic Acyl-thioester intermediate. Positions 185 and 230 each coordinate CoA. Tyr-185 provides a ligand contact to K(+). Ala-250 contributes to the K(+) binding site. Position 251 (Ser-251) interacts with CoA. A K(+)-binding site is contributed by Val-348. Catalysis depends on proton acceptor residues His-352 and Cys-382.

The protein belongs to the thiolase-like superfamily. Thiolase family. Homotetramer.

The protein resides in the cytoplasm. Its subcellular location is the cytosol. The enzyme catalyses 2 acetyl-CoA = acetoacetyl-CoA + CoA. Its pathway is metabolic intermediate biosynthesis; (R)-mevalonate biosynthesis; (R)-mevalonate from acetyl-CoA: step 1/3. Functionally, acetyl-CoA acetyltransferase; part of the first module of ergosterol biosynthesis pathway that includes the early steps of the pathway, conserved across all eukaryotes, and which results in the formation of mevalonate from acetyl-coenzyme A (acetyl-CoA). ERG10 catalyzes the formation of acetoacetyl-CoA from acetyl-CoA. The first module starts with the action of the cytosolic acetyl-CoA acetyltransferase ERG10 that catalyzes the formation of acetoacetyl-CoA. The hydroxymethylglutaryl-CoA synthase ERG13 then condenses acetyl-CoA with acetoacetyl-CoA to form HMG-CoA. The 3-hydroxy-3-methylglutaryl-coenzyme A (HMG-CoA) reductase HMG1 finally reduces HMG-CoA to produce mevalonate. This chain is Acetyl-CoA acetyltransferase, found in Candida albicans (strain SC5314 / ATCC MYA-2876) (Yeast).